The sequence spans 208 residues: Uracil phosphoribosyltransferase (208 aa).

5-phospho-alpha-D-ribose 1-diphosphate contacts are provided by residues Arg-78, Arg-103, and 130 to 138 (DPMLATGGS). Residues Ile-193 and 198–200 (GDA) each bind uracil. Asp-199 serves as a coordination point for 5-phospho-alpha-D-ribose 1-diphosphate.

The protein belongs to the UPRTase family. Mg(2+) is required as a cofactor.

The catalysed reaction is UMP + diphosphate = 5-phospho-alpha-D-ribose 1-diphosphate + uracil. The protein operates within pyrimidine metabolism; UMP biosynthesis via salvage pathway; UMP from uracil: step 1/1. With respect to regulation, allosterically activated by GTP. Functionally, catalyzes the conversion of uracil and 5-phospho-alpha-D-ribose 1-diphosphate (PRPP) to UMP and diphosphate. In Shewanella piezotolerans (strain WP3 / JCM 13877), this protein is Uracil phosphoribosyltransferase.